Consider the following 168-residue polypeptide: Ribosome maturation factor RimM (168 aa).

Residues 96 to 168 (EDEYFITDLI…VMIVRLLEGL (73 aa)) enclose the PRC barrel domain.

The protein belongs to the RimM family. As to quaternary structure, binds ribosomal protein uS19.

It is found in the cytoplasm. Functionally, an accessory protein needed during the final step in the assembly of 30S ribosomal subunit, possibly for assembly of the head region. Essential for efficient processing of 16S rRNA. May be needed both before and after RbfA during the maturation of 16S rRNA. It has affinity for free ribosomal 30S subunits but not for 70S ribosomes. The polypeptide is Ribosome maturation factor RimM (Caldanaerobacter subterraneus subsp. tengcongensis (strain DSM 15242 / JCM 11007 / NBRC 100824 / MB4) (Thermoanaerobacter tengcongensis)).